The primary structure comprises 407 residues: Putative nickel insertion protein (407 aa).

It belongs to the LarC family.

The polypeptide is Putative nickel insertion protein (Gloeothece citriformis (strain PCC 7424) (Cyanothece sp. (strain PCC 7424))).